Reading from the N-terminus, the 137-residue chain is Ribonuclease VapC18 (137 aa).

Residues 4–126 enclose the PINc domain; sequence CVDTSAWHHA…YDRVAAITGQ (123 aa). Mg(2+) is bound by residues Asp-6 and Asp-96.

Belongs to the PINc/VapC protein family. The cofactor is Mg(2+).

Functionally, toxic component of a type II toxin-antitoxin (TA) system. An RNase. The cognate antitoxin is VapB18. The polypeptide is Ribonuclease VapC18 (Mycobacterium tuberculosis (strain ATCC 25618 / H37Rv)).